The chain runs to 202 residues: Mitochondrial import receptor subunit TOM20-3 (202 aa).

At Met1 the chain carries N-acetylmethionine. The Cytoplasmic segment spans residues 1–174 (MDTETEFDRI…NKKSSDAKYD (174 aa)). TPR repeat units follow at residues 38 to 74 (GGVL…DPKK) and 86 to 119 (TSFA…QPDN). Positions 146–166 (SQPMGRVEAPAPPSSKAVKNK) are disordered. Residues 175-192 (AMGWVILAIGVVAWISFA) form a helical membrane-spanning segment. At 193–202 (KANVPVSPPR) the chain is on the mitochondrial intermembrane side.

The protein belongs to the Tom20 family. In terms of assembly, forms part of the preprotein translocase complex of the outer mitochondrial membrane (TOM complex) which consists of at least 6 different proteins (TOM5, TOM6, TOM7, TOM20, TOM22/TOM9 and TOM40). Component of a mitochondrial large protein complex that contains, at least, MIC60, DGS1, TOM40, TOM20 proteins, and petC/RISP. In terms of processing, the N-terminus is blocked. In terms of tissue distribution, expressed in roots, flowers, young cotyledons and leaves.

The protein localises to the mitochondrion outer membrane. Central component of the receptor complex responsible for the recognition and translocation of cytosolically synthesized mitochondrial preproteins. Together with TOM22 functions as the transit peptide receptor at the surface of the mitochondrion outer membrane and facilitates the movement of preproteins into the translocation pore. The chain is Mitochondrial import receptor subunit TOM20-3 from Arabidopsis thaliana (Mouse-ear cress).